The primary structure comprises 527 residues: Zinc finger imprinted 2 (527 aa).

Acidic residues predominate over residues 1–16 (MYQPEDDNNSDVTSDD). Residues 1–104 (MYQPEDDNNS…SRSQDAESYQ (104 aa)) form a disordered region. Basic and acidic residues-rich tracts occupy residues 17–26 (DMTRNRRESS), 35–56 (SGDR…DRWS), and 80–99 (FEMD…RSQD). Residues 176–246 (VTFEDVLVDF…ETDSRHTVIC (71 aa)) form the KRAB domain. Positions 247 to 322 (QGESHDDPLE…GICTSPQSAS (76 aa)) are disordered. A compositionally biased stretch (polar residues) spans 259-275 (QGNQEKLLTPITMNDPK). Positions 297–307 (QSKDPLGKDPQ) are enriched in basic and acidic residues. 5 C2H2-type zinc fingers span residues 328-350 (NRCE…ERIH), 356-378 (YECK…QKTH), 412-434 (FECF…LKAH), 466-488 (CQCC…YRTH), and 494-516 (YQCQ…YQLH).

It belongs to the krueppel C2H2-type zinc-finger protein family. As to expression, highest levels of expression in adult testis; modest levels in fetal kidney and brain.

It is found in the nucleus. Its function is as follows. May be involved in transcriptional regulation. In Homo sapiens (Human), this protein is Zinc finger imprinted 2 (ZIM2).